The chain runs to 1526 residues: uncharacterized protein (1526 aa).

WD repeat units follow at residues 334-376, 862-901, 904-945, 946-985, 988-1027, 1030-1069, 1072-1111, 1114-1153, 1156-1195, 1198-1237, 1240-1279, 1282-1321, 1324-1363, 1366-1405, 1408-1447, and 1450-1491; these read CTKE…EHIS, KILGSVLTVAFSPDGKLFATGDSGGIVRFWEAATGKELLT, GHNS…KTFK, GHTSRVRSVVFSPNSLMLASGSSDQTVRLWDISSGECLYI, GHTGWVYSVAFNLDGSMLATGSGDQTVRLWDISSSQCFYI, GHTSCVRSVVFSSDGAMLASGSDDQTVRLWDISSGNCLYT, GHTSCVRSVVFSPDGAMLASGGDDQIVRLWDISSGNCLYT, GYTSWVRFLVFSPNGVTLANGSSDQIVRLWDISSKKCLYT, GHTNWVNAVAFSPDGATLASGSGDQTVRLWDISSSKCLYI, GHTSWVNSVVFNPDGSTLASGSSDQTVRLWEINSSKCLCT, GHTSWVNSVVFNPDGSMLASGSSDKTVRLWDISSSKCLHT, GHTNWVNSVAFNPDGSMLASGSGDQTVRLWEISSSKCLHT, GHTSWVSSVTFSPDGTMLASGSDDQTVRLWSISSGECLYT, GHTNWVGSVIFSPDGAILASGSGDQTVRLWSISSGKCLYT, GHNNWVGSIVFSPDGTLLASGSDDQTVRLWNISSGECLYT, and GHIN…KTLK. Residues 823–862 form the Pentapeptide repeat domain; it reads MVLEGRDLSHTVIIGADFTNTSLRCVNFTEANLAYSVFTK.

This is an uncharacterized protein from Nostoc sp. (strain PCC 7120 / SAG 25.82 / UTEX 2576).